Here is a 743-residue protein sequence, read N- to C-terminus: 1,4-alpha-glucan branching enzyme GlgB 2 (743 aa).

A disordered region spans residues 1–23; it reads MSERQGGQEQRTEADGMTTEGIS. Asp422 acts as the Nucleophile in catalysis. The Proton donor role is filled by Glu475.

The protein belongs to the glycosyl hydrolase 13 family. GlgB subfamily. In terms of assembly, monomer.

The enzyme catalyses Transfers a segment of a (1-&gt;4)-alpha-D-glucan chain to a primary hydroxy group in a similar glucan chain.. It functions in the pathway glycan biosynthesis; glycogen biosynthesis. In terms of biological role, catalyzes the formation of the alpha-1,6-glucosidic linkages in glycogen by scission of a 1,4-alpha-linked oligosaccharide from growing alpha-1,4-glucan chains and the subsequent attachment of the oligosaccharide to the alpha-1,6 position. The sequence is that of 1,4-alpha-glucan branching enzyme GlgB 2 from Xanthomonas euvesicatoria pv. vesicatoria (strain 85-10) (Xanthomonas campestris pv. vesicatoria).